Reading from the N-terminus, the 446-residue chain is MELNDKKVLVVGLAKTGVACARFLASRGARVTVTDMRDEAALAGQLALLEGRGIRRELTRHDAGTFTQSHLIVVSPGVPRTLPQLVMAHEAGVEIISEIELASRFIQAPLVAITGTNGKTTATTITGDIFIKNGFRTFVGGNIGNPLIELLESAEPVERVVAEISSFQLEWIRAFRPAVAALLNLSEDHLDRYASYREYIEAKLRIFENQTADDYAVVNADDELVMEHSRGLRACLFPFSRKQELDEGIFHREGLIVWRHNGREERFPTAGFRLQGVHNLENIMAALACSLLLECRPTESLACVREFEALHHRMEFVRELNGVRWYEDSKATNVGSVEKALESFDAITLIAGGKDKGGSYSPLSRLVRERVRHLVLIGEAAGRMQEELGTLTDTRRAATLEEAVSLAAELTAPGGTVLMSPACSSFDMFRDYEERAQRYIAAVKAL.

115 to 121 (GTNGKTT) contributes to the ATP binding site.

It belongs to the MurCDEF family.

It localises to the cytoplasm. The catalysed reaction is UDP-N-acetyl-alpha-D-muramoyl-L-alanine + D-glutamate + ATP = UDP-N-acetyl-alpha-D-muramoyl-L-alanyl-D-glutamate + ADP + phosphate + H(+). It functions in the pathway cell wall biogenesis; peptidoglycan biosynthesis. Functionally, cell wall formation. Catalyzes the addition of glutamate to the nucleotide precursor UDP-N-acetylmuramoyl-L-alanine (UMA). This Pelobacter propionicus (strain DSM 2379 / NBRC 103807 / OttBd1) protein is UDP-N-acetylmuramoylalanine--D-glutamate ligase.